A 1796-amino-acid chain; its full sequence is U3 small nucleolar RNA-associated protein 10 (1796 aa).

HEAT repeat units follow at residues 586–623, 656–692, 861–898, 983–1021, 1052–1089, 1161–1198, 1258–1295, 1302–1340, 1344–1383, 1492–1529, 1711–1748, and 1752–1789; these read LDLQAMIPYCVAALSDPAKKVRQAAADLITVLSKSNAE, LLQEIIVPALEESVLDEEHISNVLRSHLQSTKDSATG, DLTTNILNAFLESLQDIPKITTDSPATKRRRTSSSDHS, DTSVGHGDVLVQCIQKSSSPAVQNSALLLVASLANTAPD, QTIKEVIPPLVETFRKSRRNLVTSAAELLSSFVIAYEH, QPKPTLAATLFNRNTDDDQDLHKTALKELTLLPKVLSS, LSIGEFIKAVENLLDRPSISLRQKVLRTLEVRVDQESN, TVLLAFLPQLTAVIRDSDDIAYKHTAVACVDKIAEKYGK, EAVAAAATTIAGDCCLGQPDKRLRVMALLCLASLVDVLQD, SAVEEYLKLLATVLDKHPSTIIAKHISTLSTIFLSALD, DHRKELNAAVLRRLRSPSASVRLAAVRCEQSLTDTLGE, and EMLSEMLPYISELQDDDDEDVEKETHRWITKIEAILGE. A disordered region spans residues 881 to 901; sequence TTDSPATKRRRTSSSDHSRGV.

This sequence belongs to the HEATR1/UTP10 family. In terms of assembly, component of the ribosomal small subunit (SSU) processome.

Its subcellular location is the nucleus. The protein resides in the nucleolus. Functionally, involved in nucleolar processing of pre-18S ribosomal RNA. Involved in ribosome biosynthesis. The chain is U3 small nucleolar RNA-associated protein 10 from Pyricularia oryzae (strain 70-15 / ATCC MYA-4617 / FGSC 8958) (Rice blast fungus).